A 68-amino-acid chain; its full sequence is Probable tautomerase HP_0924 (68 aa).

Proline 2 acts as the Proton acceptor; via imino nitrogen in catalysis.

This sequence belongs to the 4-oxalocrotonate tautomerase family.

This Helicobacter pylori (strain ATCC 700392 / 26695) (Campylobacter pylori) protein is Probable tautomerase HP_0924.